The following is a 153-amino-acid chain: Regulator of ribonuclease activity B (153 aa).

A disordered region spans residues 114–153; sequence DPNADDDEYGDDGEFLDDEDEYGDDGEFFDDEDEEEPRVH. Positions 115–153 are enriched in acidic residues; the sequence is PNADDDEYGDDGEFLDDEDEYGDDGEFFDDEDEEEPRVH.

This sequence belongs to the RraB family. In terms of assembly, interacts with the C-terminal region of Rne.

The protein resides in the cytoplasm. Globally modulates RNA abundance by binding to RNase E (Rne) and regulating its endonucleolytic activity. Can modulate Rne action in a substrate-dependent manner by altering the composition of the degradosome. The polypeptide is Regulator of ribonuclease activity B (Haemophilus influenzae (strain ATCC 51907 / DSM 11121 / KW20 / Rd)).